We begin with the raw amino-acid sequence, 754 residues long: Aspartyl/asparaginyl beta-hydroxylase (754 aa).

The segment at 1-48 (MAPRKNAKGGGGNSSSSSSGSPTGCTSGGSSSPGARRETKQGGLKNGR) is disordered. The Cytoplasmic portion of the chain corresponds to 1-56 (MAPRKNAKGGGGNSSSSSSGSPTGCTSGGSSSPGARRETKQGGLKNGRKGGLSGSS). Over residues 14–34 (SSSSSSGSPTGCTSGGSSSPG) the composition is skewed to low complexity. Position 15 is a phosphoserine (serine 15). A helical; Signal-anchor for type II membrane protein membrane pass occupies residues 57-77 (FFTWFMVIALLGVWTSVAVVW). Topologically, residues 78-754 (FDLVDYEEVL…PHQRRSLPAI (677 aa)) are lumenal. Asparagine 96 carries N-linked (GlcNAc...) asparagine glycosylation. 5 residues coordinate Ca(2+): aspartate 109, aspartate 111, aspartate 113, aspartate 115, and aspartate 120. Disordered regions lie at residues 176–197 (VYSE…ELQP) and 247–326 (EQEN…KKKK). Composition is skewed to basic and acidic residues over residues 261 to 284 (DAER…DHAV) and 309 to 318 (TNKKADEPGK). 5 TPR repeats span residues 337-370 (IKAE…YPQS), 378-411 (AQCE…PDAP), 450-483 (TALK…TPND), 485-517 (FAKV…GDPG), and 521-553 (GRFY…GHFA). The N-linked (GlcNAc...) asparagine glycan is linked to asparagine 466. Tryptophan 621 contacts 2-oxoglutarate. A disulfide bridge links cysteine 637 with cysteine 644. Residue serine 664 coordinates 2-oxoglutarate. Histidine 675 is a binding site for Fe cation. 684 to 686 (RMH) provides a ligand contact to 2-oxoglutarate. Asparagine 702 carries an N-linked (GlcNAc...) asparagine glycan. Histidine 721 contributes to the Fe cation binding site. Arginine 731 contributes to the 2-oxoglutarate binding site.

Belongs to the aspartyl/asparaginyl beta-hydroxylase family. As to quaternary structure, monomer. The cofactor is Fe cation. In terms of processing, might be processed to the 56 kDa (AA 289-754) or 52 kDa (AA 311-754) forms in the lumen of the endoplasmic reticulum.

Its subcellular location is the endoplasmic reticulum membrane. It carries out the reaction L-aspartyl-[protein] + 2-oxoglutarate + O2 = 3-hydroxy-L-aspartyl-[protein] + succinate + CO2. Functionally, specifically hydroxylates an Asp or Asn residue in certain epidermal growth factor-like (EGF) domains of a number of proteins. This is Aspartyl/asparaginyl beta-hydroxylase (ASPH) from Bos taurus (Bovine).